The primary structure comprises 428 residues: Divergent protein kinase domain 1A (428 aa).

Over 1-27 (MARSLCAGAWLRKPHYLQARLSYMRVK) the chain is Cytoplasmic. The chain crosses the membrane as a helical span at residues 28-48 (YLFFSWLVVFVGSWIIYVQYS). Residues 49–428 (TYTELCRGKD…WKKISYTNDS (380 aa)) lie on the Lumenal side of the membrane.

It belongs to the DIPK family. Among the many cysteines in the lumenal domain, most are probably involved in disulfide bonds. Ubiquitous.

It localises to the endoplasmic reticulum membrane. This Mus musculus (Mouse) protein is Divergent protein kinase domain 1A (Dipk1a).